The chain runs to 218 residues: Octanoyltransferase (218 aa).

Residues 31–206 enclose the BPL/LPL catalytic domain; it reads REAGDEVWLV…QLVKHLDYAE (176 aa). Residues 70 to 77, 137 to 139, and 150 to 152 each bind substrate; these read RGGQVTYH, SLG, and GLA. The active-site Acyl-thioester intermediate is cysteine 168.

This sequence belongs to the LipB family.

It localises to the cytoplasm. The enzyme catalyses octanoyl-[ACP] + L-lysyl-[protein] = N(6)-octanoyl-L-lysyl-[protein] + holo-[ACP] + H(+). The protein operates within protein modification; protein lipoylation via endogenous pathway; protein N(6)-(lipoyl)lysine from octanoyl-[acyl-carrier-protein]: step 1/2. Functionally, catalyzes the transfer of endogenously produced octanoic acid from octanoyl-acyl-carrier-protein onto the lipoyl domains of lipoate-dependent enzymes. Lipoyl-ACP can also act as a substrate although octanoyl-ACP is likely to be the physiological substrate. The polypeptide is Octanoyltransferase (Pseudomonas syringae pv. tomato (strain ATCC BAA-871 / DC3000)).